A 289-amino-acid polypeptide reads, in one-letter code: uncharacterized protein (289 aa).

Residues 1-19 (MAKWLGAPLARGVSTATRA) form the signal peptide. 2 helical membrane passes run 90 to 110 (GLLA…GWGV) and 257 to 277 (AALS…LVFA).

The protein resides in the cell membrane. This is an uncharacterized protein from Mycobacterium tuberculosis (strain ATCC 25618 / H37Rv).